We begin with the raw amino-acid sequence, 464 residues long: MFMKATETMICLVDGEHYLPVTRAAVETLDSMEHIDVKALIFIGGTEKLRTSSPEEYTEIMGRPVHFGDDPHRIPYKLIGELIRKYGADTVMDLSDEPVLDYSKRFRIASVVLGEGAVYRGPDFEFQPLTEYDILEKPSLKILGTGKRIGKTAVSAYAARLIHERQYNPCVVAMGRGGPEEPEIVHGDRIEITPEFLMEQSDKGVHAASDHWEDALMSRILTVGCRRCGGGMVGDVFITNMKRGAETANRLDADFVILEGSGAAIPPVKSNRHIVLVGANQPLINIKNFFGPFRIGLADLVIVTMCEEPMAGDEKVREIVDFIESINPEAEVITTVFRPKPLGEIEGKNVLFATTAPDSVKDLLVEYLESEYSCRVVGTTPHLSNRPLLQRDIERYIEDADVMLTELKAAAVDVATKDALEAGLEVIYCDNIPVVRDGAQDELDDAIISVVERAIADFNLRKTP.

This sequence belongs to the cyclic 2,3-diphosphoglycerate synthetase family.

Its subcellular location is the cytoplasm. It carries out the reaction (2R)-2,3-bisphosphoglycerate + ATP + H(+) = cyclic (2R)-2,3-bisphosphoglycerate + ADP + phosphate. Activity decreases in response to phosphate limitation. Its function is as follows. Catalyzes the formation of cyclic 2,3-diphosphoglycerate (cDPG) by formation of an intramolecular phosphoanhydride bond at the expense of ATP. Not able to catalyze cDPG hydrolysis. May be involved in osmotic balance. The protein is Cyclic 2,3-diphosphoglycerate synthetase (cpgS) of Methanothermobacter thermautotrophicus (strain ATCC 29096 / DSM 1053 / JCM 10044 / NBRC 100330 / Delta H) (Methanobacterium thermoautotrophicum).